We begin with the raw amino-acid sequence, 713 residues long: Cadherin-13 (713 aa).

The N-terminal stretch at 1 to 22 is a signal peptide; it reads MQPRTPLVLCVLLSQVLLLTSA. Residues 23–138 constitute a propeptide that is removed on maturation; it reads EDLDCIPGFQ…RTSPVPRQKR (116 aa). N52 and N86 each carry an N-linked (GlcNAc...) asparagine glycan. 5 consecutive Cadherin domains span residues 139–245, 246–363, 364–477, 478–585, and 584–690; these read SIVV…RPIF, REGP…SPKF, TKKE…GPVF, YPDP…APFI, and FIYP…VDSN. N-linked (GlcNAc...) asparagine glycosylation is found at N382, N489, N500, N530, N598, N638, and N671. The GPI-anchor amidated asparagine moiety is linked to residue N690. The propeptide at 691-713 is removed in mature form; that stretch reads AVGALRFSLPSLLLLSLFSLACL.

As to quaternary structure, by contrast to classical cadherins, homodimerization in trans is not mediated by cadherin EC1 domain strand-swapping, but instead through a homophilic adhesive interface which joins two elongated EC1-EC2 domains through a region near their Ca2+-binding sites to form a tetrahedral, X-like shape.

It is found in the cell membrane. The protein resides in the cytoplasm. Functionally, cadherins are calcium-dependent cell adhesion proteins. They preferentially interact with themselves in a homophilic manner in connecting cells; cadherins may thus contribute to the sorting of heterogeneous cell types. May act as a negative regulator of neural cell growth. The sequence is that of Cadherin-13 (CDH13) from Pongo abelii (Sumatran orangutan).